The primary structure comprises 66 residues: Large ribosomal subunit protein bL35 (66 aa).

Basic residues-rich tracts occupy residues 1–16 (MPKFKTHRASAKRFKR) and 23–45 (KRSHAYTSHRFHGKTKKQRRQLR). Residues 1 to 66 (MPKFKTHRAS…RIRQMLSGLK (66 aa)) are disordered.

The protein belongs to the bacterial ribosomal protein bL35 family.

The sequence is that of Large ribosomal subunit protein bL35 from Latilactobacillus sakei subsp. sakei (strain 23K) (Lactobacillus sakei subsp. sakei).